A 448-amino-acid chain; its full sequence is Exodeoxyribonuclease 7 large subunit (448 aa).

Belongs to the XseA family. Heterooligomer composed of large and small subunits.

The protein resides in the cytoplasm. The enzyme catalyses Exonucleolytic cleavage in either 5'- to 3'- or 3'- to 5'-direction to yield nucleoside 5'-phosphates.. Bidirectionally degrades single-stranded DNA into large acid-insoluble oligonucleotides, which are then degraded further into small acid-soluble oligonucleotides. This is Exodeoxyribonuclease 7 large subunit from Photobacterium profundum (strain SS9).